A 743-amino-acid chain; its full sequence is Photosystem I P700 chlorophyll a apoprotein A2 (743 aa).

The next 8 helical transmembrane spans lie at 46–69 (IFAT…FHVA), 135–158 (LYMG…LHLQ), 175–199 (LNHH…HVAI), 273–291 (MAHH…GHMY), 336–359 (LHFQ…QHMY), 375–401 (AALY…IFWV), 423–445 (AIIS…LYVH), and 526–544 (FLVH…LILV). [4Fe-4S] cluster-binding residues include Cys568 and Cys577. The next 2 helical transmembrane spans lie at 584 to 605 (AFYL…YWHW) and 652 to 674 (LSVW…MFLI). Chlorophyll a contacts are provided by His663, Met671, and Tyr679. A phylloquinone-binding site is contributed by Trp680. The helical transmembrane segment at 716-736 (LVGLTHFTVGYVLTYAAFLIA) threads the bilayer.

The protein belongs to the PsaA/PsaB family. As to quaternary structure, the PsaA/B heterodimer binds the P700 chlorophyll special pair and subsequent electron acceptors. PSI consists of a core antenna complex that captures photons, and an electron transfer chain that converts photonic excitation into a charge separation. The cyanobacterial PSI reaction center is composed of one copy each of PsaA,B,C,D,E,F,I,J,K,L,M and X, and forms trimeric complexes. The cofactor is PSI electron transfer chain: 5 chlorophyll a, 1 chlorophyll a', 2 phylloquinones and 3 4Fe-4S clusters. PSI core antenna: 90 chlorophyll a, 22 carotenoids, 3 phospholipids and 1 galactolipid. P700 is a chlorophyll a/chlorophyll a' dimer, A0 is one or more chlorophyll a, A1 is one or both phylloquinones and FX is a shared 4Fe-4S iron-sulfur center..

The protein resides in the cellular thylakoid membrane. The enzyme catalyses reduced [plastocyanin] + hnu + oxidized [2Fe-2S]-[ferredoxin] = oxidized [plastocyanin] + reduced [2Fe-2S]-[ferredoxin]. Its function is as follows. PsaA and PsaB bind P700, the primary electron donor of photosystem I (PSI), as well as the electron acceptors A0, A1 and FX. PSI is a plastocyanin/cytochrome c6-ferredoxin oxidoreductase, converting photonic excitation into a charge separation, which transfers an electron from the donor P700 chlorophyll pair to the spectroscopically characterized acceptors A0, A1, FX, FA and FB in turn. Oxidized P700 is reduced on the lumenal side of the thylakoid membrane by plastocyanin or cytochrome c6. This Mastigocladus laminosus (Fischerella sp.) protein is Photosystem I P700 chlorophyll a apoprotein A2.